The sequence spans 367 residues: Putative S-adenosyl-L-methionine-dependent methyltransferase MT0751 (367 aa).

Residues aspartate 137 and 166–167 contribute to the S-adenosyl-L-methionine site; that span reads DL. The segment covering 348 to 358 has biased composition (polar residues); sequence TRSDAHQASTT. A disordered region spans residues 348 to 367; it reads TRSDAHQASTTAPPPPGLTG.

It belongs to the UPF0677 family.

Functionally, exhibits S-adenosyl-L-methionine-dependent methyltransferase activity. The sequence is that of Putative S-adenosyl-L-methionine-dependent methyltransferase MT0751 from Mycobacterium tuberculosis (strain CDC 1551 / Oshkosh).